A 202-amino-acid polypeptide reads, in one-letter code: GTP cyclohydrolase 1 (202 aa).

3 residues coordinate Zn(2+): Cys-90, His-93, and Cys-163.

Belongs to the GTP cyclohydrolase I family. As to quaternary structure, homomer.

It carries out the reaction GTP + H2O = 7,8-dihydroneopterin 3'-triphosphate + formate + H(+). Its pathway is cofactor biosynthesis; 7,8-dihydroneopterin triphosphate biosynthesis; 7,8-dihydroneopterin triphosphate from GTP: step 1/1. This is GTP cyclohydrolase 1 from Mycobacterium ulcerans (strain Agy99).